The chain runs to 727 residues: YTH domain-containing protein 1 (727 aa).

Residues Met1–Glu12 show a composition bias toward basic and acidic residues. Positions Met1–Arg338 are disordered. Position 35 is a phosphoserine (Ser35). Residues Asp50–Arg59 are compositionally biased toward basic and acidic residues. The segment covering Ser63–Lys90 has biased composition (polar residues). Residues Ser91–Ile115 show a composition bias toward basic and acidic residues. Residue Lys96 forms a Glycyl lysine isopeptide (Lys-Gly) (interchain with G-Cter in SUMO2) linkage. A phosphoserine mark is found at Ser118 and Ser120. Residues Glu124–Ala144 are compositionally biased toward basic and acidic residues. At Ser146 the chain carries Phosphoserine. Residue Thr148 is modified to Phosphothreonine. 2 stretches are compositionally biased toward basic and acidic residues: residues Gly151–Ala163 and Ser170–Thr185. A compositionally biased stretch (acidic residues) spans Glu199–Glu254. A compositionally biased stretch (basic and acidic residues) spans Arg255–Ala270. A compositionally biased stretch (polar residues) spans Phe280–Ser289. Phosphoserine occurs at positions 308, 315, 317, 318, and 320. A compositionally biased stretch (low complexity) spans Ser315–Gly325. The region spanning Ala355–Phe492 is the YTH domain. RNA-binding positions include Lys361–Asn363 and Trp377–Ser378. Residue Ser424 is modified to Phosphoserine. Trp428 serves as a coordination point for RNA. Phosphoserine is present on Ser435. An RNA-binding site is contributed by Asp476. Over residues Arg508 to Pro523 the composition is skewed to basic residues. 3 disordered regions span residues Arg508–Leu564, Gly607–Pro643, and Ala669–Arg727. A compositionally biased stretch (basic and acidic residues) spans Ser524–Leu564. Ser545 bears the Phosphoserine mark. A compositionally biased stretch (basic and acidic residues) spans Arg679–Arg727.

As to quaternary structure, interacts with SRSF1. Interacts with SRSF2. Interacts with SRSF3. Interacts with SRSF7. Interacts with SRSF10. Interacts with CPSF6. Interacts with KHDRBS1/SAM68. Interacts with TRA2B. Interacts with KHDRBS3. Interacts with EMD. Interacts with RBMX. Interacts with ZCCHC8. Post-translationally, tyrosine phosphorylated.

It is found in the nucleus. It localises to the nucleus speckle. In terms of biological role, regulator of alternative splicing that specifically recognizes and binds N6-methyladenosine (m6A)-containing RNAs. M6A is a modification present at internal sites of mRNAs and some non-coding RNAs and plays a role in the efficiency of mRNA splicing, processing and stability. Acts as a key regulator of exon-inclusion or exon-skipping during alternative splicing via interaction with mRNA splicing factors SRSF3 and SRSF10. Specifically binds m6A-containing mRNAs and promotes recruitment of SRSF3 to its mRNA-binding elements adjacent to m6A sites, leading to exon-inclusion during alternative splicing. In contrast, interaction with SRSF3 prevents interaction with SRSF10, a splicing factor that promotes exon skipping: this prevents SRSF10 from binding to its mRNA-binding sites close to m6A-containing regions, leading to inhibit exon skipping during alternative splicing. May also regulate alternative splice site selection. Also involved in nuclear export of m6A-containing mRNAs via interaction with SRSF3: interaction with SRSF3 facilitates m6A-containing mRNA-binding to both SRSF3 and NXF1, promoting mRNA nuclear export. Involved in S-adenosyl-L-methionine homeostasis by regulating expression of MAT2A transcripts, probably by binding m6A-containing MAT2A mRNAs. Also recognizes and binds m6A on other RNA molecules. Involved in random X inactivation mediated by Xist RNA: recognizes and binds m6A-containing Xist and promotes transcription repression activity of Xist. Also recognizes and binds m6A-containing single-stranded DNA. Involved in germline development: required for spermatogonial development in males and oocyte growth and maturation in females, probably via its role in alternative splicing. The protein is YTH domain-containing protein 1 of Homo sapiens (Human).